The chain runs to 179 residues: Large ribosomal subunit protein uL5 (179 aa).

Belongs to the universal ribosomal protein uL5 family. Part of the 50S ribosomal subunit; part of the 5S rRNA/L5/L18/L25 subcomplex. Contacts the 5S rRNA and the P site tRNA. Forms a bridge to the 30S subunit in the 70S ribosome.

This is one of the proteins that bind and probably mediate the attachment of the 5S RNA into the large ribosomal subunit, where it forms part of the central protuberance. In the 70S ribosome it contacts protein S13 of the 30S subunit (bridge B1b), connecting the 2 subunits; this bridge is implicated in subunit movement. Contacts the P site tRNA; the 5S rRNA and some of its associated proteins might help stabilize positioning of ribosome-bound tRNAs. This chain is Large ribosomal subunit protein uL5, found in Pectobacterium atrosepticum (strain SCRI 1043 / ATCC BAA-672) (Erwinia carotovora subsp. atroseptica).